Consider the following 260-residue polypeptide: Flap endonuclease Xni (260 aa).

Residue Asp-109 coordinates Mg(2+). In terms of domain architecture, 5'-3' exonuclease spans 165–259 (VKPSQLADYW…DIRFTGPNKA (95 aa)). Residues Leu-176, Pro-185, Val-187, and Ile-190 each contribute to the K(+) site. Residues 189-194 (GIGPKA) form an interaction with DNA region.

Belongs to the Xni family. Mg(2+) is required as a cofactor. Requires K(+) as cofactor.

Its function is as follows. Has flap endonuclease activity. During DNA replication, flap endonucleases cleave the 5'-overhanging flap structure that is generated by displacement synthesis when DNA polymerase encounters the 5'-end of a downstream Okazaki fragment. This is Flap endonuclease Xni from Vibrio parahaemolyticus serotype O3:K6 (strain RIMD 2210633).